We begin with the raw amino-acid sequence, 371 residues long: Chaperone protein DnaJ (371 aa).

Positions 4–68 constitute a J domain; that stretch reads DYYKILGVSK…QKRAAYDRFG (65 aa). The segment at 134–212 adopts a CR-type zinc-finger fold; it reads GIEKNISFSS…CHGMGRCHKQ (79 aa). 8 residues coordinate Zn(2+): Cys147, Cys150, Cys164, Cys167, Cys186, Cys189, Cys200, and Cys203. 4 CXXCXGXG motif repeats span residues 147 to 154, 164 to 171, 186 to 193, and 200 to 207; these read CDTCHGSG, CDACGGVG, CHKCKGNG, and CKKCHGMG.

The protein belongs to the DnaJ family. As to quaternary structure, homodimer. Zn(2+) is required as a cofactor.

It localises to the cytoplasm. Its function is as follows. Participates actively in the response to hyperosmotic and heat shock by preventing the aggregation of stress-denatured proteins and by disaggregating proteins, also in an autonomous, DnaK-independent fashion. Unfolded proteins bind initially to DnaJ; upon interaction with the DnaJ-bound protein, DnaK hydrolyzes its bound ATP, resulting in the formation of a stable complex. GrpE releases ADP from DnaK; ATP binding to DnaK triggers the release of the substrate protein, thus completing the reaction cycle. Several rounds of ATP-dependent interactions between DnaJ, DnaK and GrpE are required for fully efficient folding. Also involved, together with DnaK and GrpE, in the DNA replication of plasmids through activation of initiation proteins. This Rickettsia akari (strain Hartford) protein is Chaperone protein DnaJ.